Reading from the N-terminus, the 455-residue chain is MNHARDTIAAVATAQGRGGVGIVRVSGPLSGQLAQAICRRELKPRFAHHGPFYGEQELPLDEGLAIYFPGPNSFTGEDVLELQGHGGPVVLDLLLRRCLELGARLARPGEFSERAFLNDKLDLAQAEAIADLIEASSEQAARNALRSLQGEFSKRVHALTESLIQLRIYVEAAIDFPEEEIDFLADGHVLSQLDGVRADLSTVLREAGQGALLRDGMTVVIAGRPNAGKSSLLNALAGREAAIVTDIAGTTRDVLREHIHIDGMPLHVVDTAGLRDTDDQVERIGVERALKAIGEADRVLLVVDSTAPEAADPFALWPEFLEQRPDPARVTLIRNKADLSGEAVTLQTSADGHVTLSLSAKSADGLELLREHLKACMGYQQTAESGFSARRRHLEALHQAEQYLEHGRNQLTLMGAGELLAEDLRMAQQALGEITGAFSSDDLLGRIFSSFCIGK.

Arginine 24, glutamate 81, and lysine 120 together coordinate (6S)-5-formyl-5,6,7,8-tetrahydrofolate. The 163-residue stretch at 216 to 378 (GMTVVIAGRP…LREHLKACMG (163 aa)) folds into the TrmE-type G domain. K(+) is bound at residue asparagine 226. Residues 226 to 231 (NAGKSS), 245 to 251 (TDIAGTT), 270 to 273 (DTAG), and 335 to 338 (NKAD) each bind GTP. Position 230 (serine 230) interacts with Mg(2+). Residues threonine 245, isoleucine 247, and threonine 250 each coordinate K(+). Threonine 251 lines the Mg(2+) pocket. Lysine 455 lines the (6S)-5-formyl-5,6,7,8-tetrahydrofolate pocket.

It belongs to the TRAFAC class TrmE-Era-EngA-EngB-Septin-like GTPase superfamily. TrmE GTPase family. In terms of assembly, homodimer. Heterotetramer of two MnmE and two MnmG subunits. K(+) is required as a cofactor.

Its subcellular location is the cytoplasm. Exhibits a very high intrinsic GTPase hydrolysis rate. Involved in the addition of a carboxymethylaminomethyl (cmnm) group at the wobble position (U34) of certain tRNAs, forming tRNA-cmnm(5)s(2)U34. This is tRNA modification GTPase MnmE from Ectopseudomonas mendocina (strain ymp) (Pseudomonas mendocina).